The chain runs to 272 residues: Short-chain dehydrogenase/reductase iacC (272 aa).

Residues Ile-13, Asp-59, and Asn-88 each coordinate NADP(+). Catalysis depends on proton donor residues Ser-150 and Tyr-169. NADP(+)-binding residues include Tyr-169, Lys-173, and Val-202. Lys-173 functions as the Lowers pKa of active site Tyr in the catalytic mechanism.

This sequence belongs to the short-chain dehydrogenases/reductases (SDR) family.

It functions in the pathway secondary metabolite biosynthesis. Functionally, short-chain dehydrogenase/reductase; part of the gene cluster that mediates the biosynthesis of iso-A82775C, a enylepoxycyclohexane and biosynthetic precursor of the chloropestolide anticancer natural products. Within the cluster, the prenyltransferase iacE prenylates siccayne to generate pestalodiol E, using dimethylallyl diphosphate (DMAPP) as cosubstrate. The probable oxidoreductase iacF is then involved in the epoxidation of pestalodiol F to pestalodiol F, which is further converted to pestalofone A by the short-chain dehydrogenase/reductase iacG. Iso-A82775C is subsequently generated from pestalofone A by the short-chain dehydrogenase/reductase iacC. Iso-A82775C is further condensed with maldoxin via a Diels-Alder reaction to produce the anticancer natural products chloropestolides A to E. The polypeptide is Short-chain dehydrogenase/reductase iacC (Pestalotiopsis fici (strain W106-1 / CGMCC3.15140)).